The following is a 515-amino-acid chain: Bifunctional purine biosynthesis protein PurH (515 aa).

One can recognise an MGS-like domain in the interval 1 to 145 (MTKRVLISVS…KNHASVTVVV (145 aa)).

This sequence belongs to the PurH family.

The catalysed reaction is (6R)-10-formyltetrahydrofolate + 5-amino-1-(5-phospho-beta-D-ribosyl)imidazole-4-carboxamide = 5-formamido-1-(5-phospho-D-ribosyl)imidazole-4-carboxamide + (6S)-5,6,7,8-tetrahydrofolate. The enzyme catalyses IMP + H2O = 5-formamido-1-(5-phospho-D-ribosyl)imidazole-4-carboxamide. The protein operates within purine metabolism; IMP biosynthesis via de novo pathway; 5-formamido-1-(5-phospho-D-ribosyl)imidazole-4-carboxamide from 5-amino-1-(5-phospho-D-ribosyl)imidazole-4-carboxamide (10-formyl THF route): step 1/1. It functions in the pathway purine metabolism; IMP biosynthesis via de novo pathway; IMP from 5-formamido-1-(5-phospho-D-ribosyl)imidazole-4-carboxamide: step 1/1. This is Bifunctional purine biosynthesis protein PurH from Streptococcus pneumoniae (strain JJA).